The primary structure comprises 319 residues: MSEILNLKDLKVYYPIRSGFFNRVTDNVLAVDGVDLTIHEGETVGLVGESGSGKSTIGKTIVGLEQMTSGQLIYKGQDVSKKKIRNQLKYNKDVQMIFQDAFSSLNPRKTIYDIIAEPIRNFEKIDANTENKRIHELLDIVGLPKQALEQYPFQFSGGQQQRIGIARAVATNPKLIVADEPVSALDLSVQAQVLNFMKLIQKDLGIAFLFISHDLGVVRHMTDNIAVMHNGRIVEKGTRRDIFDEPQHIYTKRLLSAIPSIDVTRRAENRKNRLKVEQDFEDKKANFYDKDGHALPLKKLSESHWAALPKGGENVESNY.

Residues 5–255 (LNLKDLKVYY…PQHIYTKRLL (251 aa)) enclose the ABC transporter domain. 48 to 55 (GESGSGKS) contributes to the ATP binding site.

The protein belongs to the ABC transporter superfamily. The complex is composed of two ATP-binding proteins (OppD and OppF), two transmembrane proteins (OppB and OppC) and a solute-binding protein (OppA).

Its subcellular location is the cell membrane. The enzyme catalyses a [peptide](out) + ATP + H2O = a [peptide](in) + ADP + phosphate + H(+). Part of the ABC transporter complex OppABCDF involved in the uptake of oligopeptides. Probably responsible for energy coupling to the transport system. Essential for uptake of peptides larger than three amino acids and for growth in milk. This chain is Oligopeptide transport ATP-binding protein OppF (oppF), found in Lactococcus lactis subsp. lactis (strain IL1403) (Streptococcus lactis).